A 292-amino-acid chain; its full sequence is MSAEPLLPTHNGSQGGEVRSPDQKFIVIRFSDVSVRDLQLNISNVPFSNINTHWLRRMCRELRPQQTQKRRLKFIRNGSILNTHSKIAEELTHYFDTANNSNVATGTSVAPEQNNYYIHCIIGTEELTQAELANEDLKDDATPSNDSMTTQAIGFDRLRSVGFTEQEIELLRQQFRATYGDLEEEEERLAQNGNRDDEGHDIRQLEEQWMESGSGTAQGNGAGGGNEDRFNSVPIANIKHNKDLLLGICVGFFFGVFGILLMKFDGLFNRRQKMAIFAGVIVNVMFCLVRGF.

Topologically, residues 1–243 are extracellular; sequence MSAEPLLPTH…PIANIKHNKD (243 aa). N-linked (GlcNAc...) asparagine glycans are attached at residues asparagine 11, asparagine 41, asparagine 77, asparagine 99, and asparagine 145. The chain crosses the membrane as a helical span at residues 244–264; sequence LLLGICVGFFFGVFGILLMKF. Topologically, residues 265 to 273 are cytoplasmic; that stretch reads DGLFNRRQK. A helical membrane pass occupies residues 274 to 291; sequence MAIFAGVIVNVMFCLVRG. Residue phenylalanine 292 is a topological domain, extracellular.

Belongs to the dsc3 family. As to quaternary structure, component of the DSC E3 ligase complexes composed of at least TUL1, DSC2, DSC3, UBX3, CDC48 as well as VLD1 for the vacuole-localized complex or GLD1 for the Golgi/endosome-localized complex.

The protein resides in the endoplasmic reticulum membrane. In terms of biological role, component of the DSC E3 ubiquitin ligase complexes that tag proteins present in Golgi, endosome and vacuole membranes and function in protein homeostasis under non-stress conditions and support a role in protein quality control. Involved in endocytic protein trafficking. This is DSC E3 ubiquitin ligase complex subunit 3 from Saccharomyces cerevisiae (strain ATCC 204508 / S288c) (Baker's yeast).